Reading from the N-terminus, the 212-residue chain is uncharacterized protein (212 aa).

Positions 53, 74, and 97 each coordinate S-adenosyl-L-methionine.

It belongs to the methyltransferase superfamily. YrrT family.

Could be a S-adenosyl-L-methionine-dependent methyltransferase. This is an uncharacterized protein from Bacillus cytotoxicus (strain DSM 22905 / CIP 110041 / 391-98 / NVH 391-98).